We begin with the raw amino-acid sequence, 175 residues long: Short chain dehydrogenase/reductase dpmpG (175 aa).

Residues Ile18, Asp71, Asn98, and Lys132 each coordinate NADP(+).

Belongs to the short-chain dehydrogenases/reductases (SDR) family.

The protein operates within secondary metabolite biosynthesis; terpenoid biosynthesis. Functionally, short chain dehydrogenase/reductase; part of the gene cluster that mediates the biosynthesis of diterpenoid pyrones. The first step of the pathway is the synthesis of the alpha-pyrone moiety by the polyketide synthase dpmpA via condensation of one acetyl-CoA starter unit with 3 malonyl-CoA units and 2 methylations. The alpha-pyrone is then combined with geranylgeranyl pyrophosphate (GGPP) formed by the GGPP synthase dpmpD through the action of the prenyltransferase dpmpC to yield a linear alpha-pyrone diterpenoid. Subsequent steps in the diterpenoid pyrone biosynthetic pathway involve the decalin core formation, which is initiated by the epoxidation of the C10-C11 olefin by the FAD-dependent oxidoreductase dpmpE, and is followed by a cyclization cascade catalyzed by the terpene cyclase dpmpB. The short chain dehydrogenase/reductase dpmpG then oxidizes the 8S hydroxy group to a ketone and the short chain dehydrogenase/reductase dpmpH reduces the ketone to the 8R hydroxy group to yield higginsianin B. Higginsianin B is further methylated by the methyltransferase dpmpI to produce the intermediate named FDDP B. The cytochrome P450 monooxygenase dpmpJ then oxidizes the C-26 methyl to primary alcohol, producing the final diterpenoid pyrone with a C-26 primary alcohol on the gamma-pyrone moiety named FDDP C. This is Short chain dehydrogenase/reductase dpmpG from Macrophomina phaseolina (strain MS6) (Charcoal rot fungus).